The following is a 339-amino-acid chain: Phenylalanine--tRNA ligase alpha subunit (339 aa).

Mg(2+) is bound at residue Glu253.

The protein belongs to the class-II aminoacyl-tRNA synthetase family. Phe-tRNA synthetase alpha subunit type 1 subfamily. Tetramer of two alpha and two beta subunits. Mg(2+) is required as a cofactor.

It localises to the cytoplasm. The catalysed reaction is tRNA(Phe) + L-phenylalanine + ATP = L-phenylalanyl-tRNA(Phe) + AMP + diphosphate + H(+). The protein is Phenylalanine--tRNA ligase alpha subunit of Alcanivorax borkumensis (strain ATCC 700651 / DSM 11573 / NCIMB 13689 / SK2).